We begin with the raw amino-acid sequence, 190 residues long: Ribosome maturation factor RimP (190 aa).

Residues 159–190 (ELELAGGIPEGRVAPADADASEDEEVVEGLDK) form a disordered region. Positions 177 to 190 (DASEDEEVVEGLDK) are enriched in acidic residues.

This sequence belongs to the RimP family.

It localises to the cytoplasm. Required for maturation of 30S ribosomal subunits. The sequence is that of Ribosome maturation factor RimP from Rhodococcus opacus (strain B4).